The following is a 422-amino-acid chain: Enolase (422 aa).

Residue Gln-163 coordinates (2R)-2-phosphoglycerate. The Proton donor role is filled by Glu-205. Mg(2+) contacts are provided by Asp-242, Glu-283, and Asp-310. The (2R)-2-phosphoglycerate site is built by Lys-335, Arg-364, Ser-365, and Lys-386. The Proton acceptor role is filled by Lys-335.

Belongs to the enolase family. Requires Mg(2+) as cofactor.

The protein resides in the cytoplasm. The protein localises to the secreted. It localises to the cell surface. It carries out the reaction (2R)-2-phosphoglycerate = phosphoenolpyruvate + H2O. Its pathway is carbohydrate degradation; glycolysis; pyruvate from D-glyceraldehyde 3-phosphate: step 4/5. In terms of biological role, catalyzes the reversible conversion of 2-phosphoglycerate (2-PG) into phosphoenolpyruvate (PEP). It is essential for the degradation of carbohydrates via glycolysis. This Bdellovibrio bacteriovorus (strain ATCC 15356 / DSM 50701 / NCIMB 9529 / HD100) protein is Enolase.